Here is a 664-residue protein sequence, read N- to C-terminus: UV-stimulated scaffold protein A homolog (664 aa).

The interval 10 to 153 (KVIGLIEKAT…LKNTLKLKFP (144 aa)) is VHS-like. Residues 148–180 (LKLKFPDLQANAARIQRERQEREMKTKEILRNK) are a coiled coil. 2 disordered regions span residues 330 to 350 (HGNE…DGKV) and 362 to 403 (MRTQ…GNSL). The span at 334-347 (ETNEEEEDIWEEDD) shows a compositional bias: acidic residues. Positions 363-374 (RTQQSENSSLPS) are enriched in polar residues. The span at 377–387 (EAKKSTSEARS) shows a compositional bias: basic and acidic residues. The segment covering 388-402 (NKVSNTKKVGSSGNS) has biased composition (polar residues). The segment at 473-500 (TPPCRASLKKGGLCQRRDLRVCPFHGPI) adopts a UVSSA-type zinc-finger fold. 4 residues coordinate Zn(2+): C476, C486, C494, and H497. Disordered stretches follow at residues 514 to 546 (SPLD…DPNQ) and 640 to 664 (VKGT…ANQW). 2 stretches are compositionally biased toward polar residues: residues 521–533 (NQTS…NQDV) and 640–650 (VKGTNPQQLAQ).

The protein belongs to the UVSSA family.

It localises to the chromosome. This is UV-stimulated scaffold protein A homolog from Arabidopsis thaliana (Mouse-ear cress).